Here is a 142-residue protein sequence, read N- to C-terminus: Heat shock protein HSP.16.4 (142 aa).

The sHSP domain occupies 27 to 142 (NLFNDLKSNL…KEIKTSIPIE (116 aa)).

It belongs to the small heat shock protein (HSP20) family.

The protein localises to the cytoplasm. In Streptococcus thermophilus, this protein is Heat shock protein HSP.16.4.